The primary structure comprises 292 residues: Inositol monophosphatase 2 (292 aa).

5 residues coordinate Mg(2+): Glu75, Asp94, Ile96, Asp97, and Asp231. Glu75 is a binding site for substrate. Substrate contacts are provided by residues 96-99 (IDGT) and Asp231.

It belongs to the inositol monophosphatase superfamily. It depends on Mg(2+) as a cofactor.

The enzyme catalyses a myo-inositol phosphate + H2O = myo-inositol + phosphate. Its pathway is polyol metabolism; myo-inositol biosynthesis; myo-inositol from D-glucose 6-phosphate: step 2/2. Its activity is regulated as follows. Inhibited by Li(+) and Na(+). Its function is as follows. Responsible for the provision of inositol required for synthesis of phosphatidylinositol and polyphosphoinositides and involved in the inositol cycle of calcium signaling. The polypeptide is Inositol monophosphatase 2 (INM2) (Saccharomyces cerevisiae (strain ATCC 204508 / S288c) (Baker's yeast)).